A 155-amino-acid chain; its full sequence is RNA pyrophosphohydrolase (155 aa).

A Nudix hydrolase domain is found at Lys-5–Ala-147. The Nudix box signature appears at Gly-42–Gly-63.

This sequence belongs to the Nudix hydrolase family. RppH subfamily. It depends on a divalent metal cation as a cofactor.

Its function is as follows. Accelerates the degradation of transcripts by removing pyrophosphate from the 5'-end of triphosphorylated RNA, leading to a more labile monophosphorylated state that can stimulate subsequent ribonuclease cleavage. This chain is RNA pyrophosphohydrolase, found in Helicobacter pylori (strain ATCC 700392 / 26695) (Campylobacter pylori).